An 832-amino-acid chain; its full sequence is DNA polymerase I, thermostable (832 aa).

The 5'-3' exonuclease domain occupies 175-260 (RPDQWADYRA…DLPLEVDFAK (86 aa)). A polymerase region spans residues 410-832 (ERLFANLWGR…IGEDWLSAKE (423 aa)).

This sequence belongs to the DNA polymerase type-A family.

The enzyme catalyses DNA(n) + a 2'-deoxyribonucleoside 5'-triphosphate = DNA(n+1) + diphosphate. Functionally, in addition to polymerase activity, this DNA polymerase exhibits 5'-3' exonuclease activity. Unlikely to have 3'-5' exonuclease activity due to absence of a 3'-5' exonuclease domain. The polypeptide is DNA polymerase I, thermostable (polA) (Thermus aquaticus).